A 266-amino-acid polypeptide reads, in one-letter code: RNA polymerase II subunit A C-terminal domain phosphatase ssu-72 (266 aa).

The interval 1–31 (MSAVDTPTGAASSSKPDQNEQNGQNGGREDS) is disordered. A compositionally biased stretch (polar residues) spans 9–23 (GAASSSKPDQNEQNG).

Belongs to the SSU72 phosphatase family. Component of the cleavage and polyadenylation factor (CPF) complex.

The protein resides in the nucleus. The catalysed reaction is O-phospho-L-seryl-[protein] + H2O = L-seryl-[protein] + phosphate. It carries out the reaction O-phospho-L-threonyl-[protein] + H2O = L-threonyl-[protein] + phosphate. Its function is as follows. Processively dephosphorylates Ser-5 of the heptad repeats YSPTSPS in the C-terminal domain of the largest RNA polymerase II subunit (rpb-1). Functionally, component of the cleavage and polyadenylation factor (CPF) complex, which plays a key role in polyadenylation-dependent pre-mRNA 3'-end formation and cooperates with cleavage factors including the CFIA complex and NAB4/CFIB. Ssu-72 is required for 3'-end formation of snoRNAs. The polypeptide is RNA polymerase II subunit A C-terminal domain phosphatase ssu-72 (ssu-72) (Neurospora crassa (strain ATCC 24698 / 74-OR23-1A / CBS 708.71 / DSM 1257 / FGSC 987)).